A 576-amino-acid chain; its full sequence is CDPK-related kinase 1 (576 aa).

The segment at 1 to 39 is disordered; sequence MGICHGKPVEQQSKSLPVSGETNEAPTNSQPPAKSSGFP. The N-myristoyl glycine moiety is linked to residue Gly-2. Positions 10–33 are enriched in polar residues; the sequence is EQQSKSLPVSGETNEAPTNSQPPA. In terms of domain architecture, Protein kinase spans 123 to 385; that stretch reads YEIDGEVGRG…AAQALCHPWL (263 aa). ATP contacts are provided by residues 129–137 and Lys-155; that span reads VGRGHFGYT. Asp-251 functions as the Proton acceptor in the catalytic mechanism. Ser-291 is subject to Phosphoserine. Ser-333 carries the post-translational modification Phosphoserine; by CPK1 and CPK34. Residues 390 to 420 are autoinhibitory domain; that stretch reads ELKIPSDMIIYKLVKVYIMSTSLRKSALAAL. The tract at residues 409 to 429 is calmodulin binding (CaMBD); it reads STSLRKSALAALAKTLTVPQL. EF-hand domains lie at 427 to 463, 464 to 499, 500 to 539, and 542 to 571; these read PQLA…STDA, MKDS…VYQL, EAME…GPSV, and HVVL…VSSR. Ca(2+) contacts are provided by Ser-442, Asn-444, Tyr-446, Lys-483, Glu-488, Asp-519, Asn-521, Glu-528, Asp-553, and Lys-555. Ser-557 carries the post-translational modification Phosphoserine.

Belongs to the protein kinase superfamily. Ser/Thr protein kinase family. CDPK subfamily. Binds calmodulin (CaM) in a calcium-dependent manner. Interacts with HSFA1A. Autophosphorylated.

It localises to the membrane. It catalyses the reaction L-seryl-[protein] + ATP = O-phospho-L-seryl-[protein] + ADP + H(+). The enzyme catalyses L-threonyl-[protein] + ATP = O-phospho-L-threonyl-[protein] + ADP + H(+). Its activity is regulated as follows. Activated by calcium and calmodulin. Autophosphorylation may play an important role in the regulation of the kinase activity. Its function is as follows. May play a role in signal transduction pathways that involve calcium as a second messenger. Serine/threonine kinase that phosphorylates histone H3. Confers thermotolerance; involved in the heat-shock-mediated calmodulin-dependent signal transduction leading to the activation of heat-shock transcription factors (HSFs); phosphorylates HSFA1A. This Arabidopsis thaliana (Mouse-ear cress) protein is CDPK-related kinase 1 (CRK1).